Here is a 316-residue protein sequence, read N- to C-terminus: Aspartate carbamoyltransferase catalytic subunit (316 aa).

Carbamoyl phosphate is bound by residues arginine 56 and threonine 57. Lysine 84 is an L-aspartate binding site. Carbamoyl phosphate is bound by residues arginine 106, histidine 139, and glutamine 142. Arginine 172 and arginine 226 together coordinate L-aspartate. Glycine 267 and proline 268 together coordinate carbamoyl phosphate.

It belongs to the aspartate/ornithine carbamoyltransferase superfamily. ATCase family. In terms of assembly, heterododecamer (2C3:3R2) of six catalytic PyrB chains organized as two trimers (C3), and six regulatory PyrI chains organized as three dimers (R2).

The enzyme catalyses carbamoyl phosphate + L-aspartate = N-carbamoyl-L-aspartate + phosphate + H(+). It participates in pyrimidine metabolism; UMP biosynthesis via de novo pathway; (S)-dihydroorotate from bicarbonate: step 2/3. Its function is as follows. Catalyzes the condensation of carbamoyl phosphate and aspartate to form carbamoyl aspartate and inorganic phosphate, the committed step in the de novo pyrimidine nucleotide biosynthesis pathway. The sequence is that of Aspartate carbamoyltransferase catalytic subunit from Mycobacterium sp. (strain MCS).